Consider the following 574-residue polypeptide: Proline--tRNA ligase (574 aa).

Belongs to the class-II aminoacyl-tRNA synthetase family. ProS type 1 subfamily. As to quaternary structure, homodimer.

The protein localises to the cytoplasm. The enzyme catalyses tRNA(Pro) + L-proline + ATP = L-prolyl-tRNA(Pro) + AMP + diphosphate. Functionally, catalyzes the attachment of proline to tRNA(Pro) in a two-step reaction: proline is first activated by ATP to form Pro-AMP and then transferred to the acceptor end of tRNA(Pro). As ProRS can inadvertently accommodate and process non-cognate amino acids such as alanine and cysteine, to avoid such errors it has two additional distinct editing activities against alanine. One activity is designated as 'pretransfer' editing and involves the tRNA(Pro)-independent hydrolysis of activated Ala-AMP. The other activity is designated 'posttransfer' editing and involves deacylation of mischarged Ala-tRNA(Pro). The misacylated Cys-tRNA(Pro) is not edited by ProRS. The chain is Proline--tRNA ligase from Nitrosococcus oceani (strain ATCC 19707 / BCRC 17464 / JCM 30415 / NCIMB 11848 / C-107).